Consider the following 255-residue polypeptide: Formate hydrogenlyase subunit 7 (255 aa).

[4Fe-4S] cluster-binding residues include cysteine 45, cysteine 51, cysteine 115, and cysteine 145.

Belongs to the complex I 20 kDa subunit family. In terms of assembly, FHL comprises of a formate dehydrogenase, unidentified electron carriers and a hydrogenase (isoenzyme 3). In this non-energy conserving pathway molecular hydrogen and carbodioxide from formate are released. [4Fe-4S] cluster serves as cofactor.

The protein is Formate hydrogenlyase subunit 7 (hycG) of Escherichia coli (strain K12).